We begin with the raw amino-acid sequence, 355 residues long: Capsular polysaccharide biosynthesis glycosyltransferase CapH (355 aa).

Belongs to the glycosyltransferase group 1 family. Glycosyltransferase 4 subfamily.

It functions in the pathway capsule biogenesis; capsule polysaccharide biosynthesis. Functionally, required for the biosynthesis of type 1 capsular polysaccharide. This Staphylococcus aureus protein is Capsular polysaccharide biosynthesis glycosyltransferase CapH (capH).